We begin with the raw amino-acid sequence, 456 residues long: Argininosuccinate lyase (456 aa).

The protein belongs to the lyase 1 family. Argininosuccinate lyase subfamily.

It localises to the cytoplasm. It carries out the reaction 2-(N(omega)-L-arginino)succinate = fumarate + L-arginine. It functions in the pathway amino-acid biosynthesis; L-arginine biosynthesis; L-arginine from L-ornithine and carbamoyl phosphate: step 3/3. The polypeptide is Argininosuccinate lyase (Carboxydothermus hydrogenoformans (strain ATCC BAA-161 / DSM 6008 / Z-2901)).